The sequence spans 81 residues: Protein translocase subunit SecE (81 aa).

Residues 50–70 (VAVILMVILVSTVIYFVDQIF) traverse the membrane as a helical segment.

The protein belongs to the SecE/SEC61-gamma family. In terms of assembly, component of the Sec protein translocase complex. Heterotrimer consisting of SecY, SecE and SecG subunits. The heterotrimers can form oligomers, although 1 heterotrimer is thought to be able to translocate proteins. Interacts with the ribosome. Interacts with SecDF, and other proteins may be involved. Interacts with SecA.

The protein resides in the cell inner membrane. It localises to the cellular thylakoid membrane. Its function is as follows. Essential subunit of the Sec protein translocation channel SecYEG. Clamps together the 2 halves of SecY. May contact the channel plug during translocation. The polypeptide is Protein translocase subunit SecE (Synechocystis sp. (strain ATCC 27184 / PCC 6803 / Kazusa)).